Consider the following 88-residue polypeptide: Putative regulatory protein Npun_R3866 (88 aa).

Belongs to the RemA family.

The sequence is that of Putative regulatory protein Npun_R3866 from Nostoc punctiforme (strain ATCC 29133 / PCC 73102).